The sequence spans 57 residues: uncharacterized protein (57 aa).

Residues 15-37 (GLAGLICIGLTISSGFSGSSILI) traverse the membrane as a helical segment.

The protein localises to the membrane. This is an uncharacterized protein from Dictyostelium discoideum (Social amoeba).